A 603-amino-acid chain; its full sequence is Replication protein A 70 kDa DNA-binding subunit (603 aa).

The interval 131-152 (PKPAVTSNSKPIAKKEPSHNNN) is disordered. Phosphoserine is present on S160. A DNA-binding region (OB) is located at residues 179 to 252 (WVIKARVTSK…QLKPANKQYS (74 aa)). Position 420 is a phosphoserine (S420). The segment at 464 to 486 (CPQSDCNKKVVDEGNDQFRCEKC) adopts a C4-type zinc-finger fold.

The protein belongs to the replication factor A protein 1 family. As to quaternary structure, component of the heterotrimeric canonical replication protein A complex (RPA).

It is found in the nucleus. Functionally, as part of the heterotrimeric replication protein A complex (RPA/RP-A), binds and stabilizes single-stranded DNA intermediates, that form during DNA replication or upon DNA stress. It prevents their reannealing and in parallel, recruits and activates different proteins and complexes involved in DNA metabolism. Thereby, it plays an essential role both in DNA replication and the cellular response to DNA damage. This Drosophila melanogaster (Fruit fly) protein is Replication protein A 70 kDa DNA-binding subunit.